The primary structure comprises 233 residues: 2-amino-5-formylamino-6-ribosylaminopyrimidin-4(3H)-one 5'-monophosphate deformylase (233 aa).

The Fe cation site is built by Glu33, His35, Asp44, and His114.

It belongs to the creatininase superfamily. FAPy deformylase family. In terms of assembly, homodimer. It depends on Fe(2+) as a cofactor. Zn(2+) serves as cofactor.

It carries out the reaction 2-amino-5-formylamino-6-(5-phospho-D-ribosylamino)pyrimidin-4(3H)-one + H2O = 2,5-diamino-6-(1-D-ribosylamino)pyrimidin-4(3H)-one 5'-phosphate + formate + H(+). The protein operates within cofactor biosynthesis; coenzyme F420 biosynthesis. It participates in cofactor biosynthesis; riboflavin biosynthesis. Catalyzes the hydrolysis of the formamide of 2-amino-5-formylamino-6-ribosylamino-4(3H)-pyrimidinone 5'-monophosphate (FAPy) to form 2,5-diamino-6-ribosylamino-4(3H)-pyrimidinone 5'-phosphate (APy). This is 2-amino-5-formylamino-6-ribosylaminopyrimidin-4(3H)-one 5'-monophosphate deformylase from Methanosphaera stadtmanae (strain ATCC 43021 / DSM 3091 / JCM 11832 / MCB-3).